Here is a 1384-residue protein sequence, read N- to C-terminus: Protein Gawky (1384 aa).

Disordered regions lie at residues 1 to 99, 148 to 227, 263 to 335, and 447 to 501; these read MREA…VWTG, NGSS…DPRG, TAST…DDGT, and VGAP…SGWS. Positions 1 to 205 are required for interaction with AGO1; that stretch reads MREALFSQDG…HRGGNGSGAT (205 aa). Sufficient for miRNA-mediated silencing stretches follow at residues 1–605 and 605–830; these read MREA…SLGS and SYAD…SVHL. Residues 15–24 show a composition bias toward polar residues; it reads HVNQDTNWEV. A compositionally biased stretch (low complexity) spans 150 to 171; sequence SSNITGSSGVATGSSGNSSNAG. Residues 205 to 490 form a minimal N-terminal region required for miRNA-mediated silencing region; that stretch reads TSSDPRDIRM…GVSWGNKQSK (286 aa). Positions 208–225 are enriched in basic and acidic residues; it reads DPRDIRMIDPRDPIRGDP. Polar residues-rich tracts occupy residues 449-475 and 485-501; these read APSSGSVSSNNWVDDKSNSTLAQNSWS and GNKQSKPPSNSASSGWS. Residues 547–588 form the UBA domain; it reads IIKQSKQYRILVENGFKKEDVERALVIANMNIEEAADMLRAN. 7 disordered regions span residues 607–626, 809–841, 889–942, 962–1022, 1052–1102, 1188–1221, and 1318–1368; these read ADHNSSTSSGGFAGRYPVNS, QNMQPTSQQQQPQQQQLPSVHLSNSGNDYLRGH, TEFS…NKDW, EPGK…LSSS, TSPL…GVQT, SENEVQSIMQHLPQTPSSTSSSGTSGGNVGGVGT, and GTAN…PSGR. Positions 809 to 826 are enriched in low complexity; that stretch reads QNMQPTSQQQQPQQQQLP. Residues 862-1115 are not required for interaction with AGO1 or miRNAs or for localization to P-bodies but necessary for miRNA-mediated silencing and for interaction with pAbp; it reads YQGASNQQSR…NWTGGNTTWG (254 aa). Residues 898-924 are compositionally biased toward polar residues; the sequence is TKQNLTANTSNINSLGLQNDSTWSTGR. Residues 940–1215 form a sufficient for miRNA-mediated silencing region; it reads KDWSVAQPTS…TSSSGTSGGN (276 aa). A compositionally biased stretch (low complexity) spans 1010–1022; sequence SPTDLPPLSLSSS. Positions 1052-1061 are enriched in polar residues; that stretch reads TSPLNKSSSR. Over residues 1068–1084 the composition is skewed to low complexity; sequence TANSNKSANSNASTPTT. One can recognise an RRM domain in the interval 1117–1189; that stretch reads SWLLLKNLTA…TTIFAESPSE (73 aa). Residues 1188-1203 are compositionally biased toward polar residues; the sequence is SENEVQSIMQHLPQTP. The interval 1200–1384 is not required for interaction with AGO1 or miRNAs or for localization to P-bodies but necessary for miRNA-mediated silencing, dissociation from AGO1 and miRNAs and interaction with pAbp; sequence PQTPSSTSSS…ISLVYSIVDD (185 aa). Residues 1211-1220 show a composition bias toward gly residues; it reads TSGGNVGGVG. A compositionally biased stretch (low complexity) spans 1318–1349; the sequence is GTANSSGSKSSANNLASGQSSASNLTNSTNST. Residues 1350–1365 are compositionally biased toward polar residues; the sequence is WRQTSQNQALQSQSRP.

Belongs to the GW182 family. As to quaternary structure, component of the miRNA-directed RNA-induced silencing complex (miRISC), composed of at least AGO1 and gw, which bind mature miRNAs and targets the selective destruction of homologous RNAs. Interacts (via N-terminal region) with AGO1 (via Piwi domain); the interaction is essential for localization of AGO1 in P-bodies and for miRNA-mediated silencing. Interacts with pAbp/PABPC1; this interaction interferes with the binding of pAbp to eIF4G and is required for miRNA-mediated silencing. Interacts with CCR4-NOT complex members Not1, Rga/NOT2, twin/CCR4, Pop2 and NOT3/5 and with PAN complex members CG8232/PAN2 and CG11486/PAN3.

It localises to the cytoplasm. The protein localises to the P-body. Functionally, required for gene silencing mediated by micro-RNAs (miRNAs). Silences both polyadenylated and deadenylated mRNAs. Required for miRNA-mediated translational repression and mRNA decay. Not required for miRNA target recognition. Necessary to initiate but not to maintain silencing. Promotes mRNA deadenylation through the recruitment of the CCR4-NOT and PAN complexes and promotes decapping by the DCP1-DCP2 complex. Dissociates from silenced mRNAs after deadenylation. Required for completion of nuclear divisions during early embryonic development. This Drosophila melanogaster (Fruit fly) protein is Protein Gawky.